The following is a 508-amino-acid chain: Methionine--tRNA ligase (508 aa).

Residues 12 to 22 (YYVNDVAHIGH) carry the 'HIGH' region motif. Positions 295 to 299 (KISKS) match the 'KMSKS' region motif. K298 contacts ATP.

Belongs to the class-I aminoacyl-tRNA synthetase family. MetG type 2B subfamily. In terms of assembly, monomer.

It is found in the cytoplasm. It catalyses the reaction tRNA(Met) + L-methionine + ATP = L-methionyl-tRNA(Met) + AMP + diphosphate. Functionally, is required not only for elongation of protein synthesis but also for the initiation of all mRNA translation through initiator tRNA(fMet) aminoacylation. The protein is Methionine--tRNA ligase (metG) of Rickettsia prowazekii (strain Madrid E).